The primary structure comprises 132 residues: Small ribosomal subunit protein uS8c (132 aa).

The protein belongs to the universal ribosomal protein uS8 family. Part of the 30S ribosomal subunit.

Its subcellular location is the plastid. The protein resides in the chloroplast. Its function is as follows. One of the primary rRNA binding proteins, it binds directly to 16S rRNA central domain where it helps coordinate assembly of the platform of the 30S subunit. The polypeptide is Small ribosomal subunit protein uS8c (rps8) (Spirogyra maxima (Green alga)).